Here is a 194-residue protein sequence, read N- to C-terminus: Fibroblast growth factor 7 (194 aa).

The signal sequence occupies residues 1–31; it reads MRKWILTWILPSLLYRSCFHIICLVGTISLA. N-linked (GlcNAc...) asparagine glycosylation is present at Asn45.

It belongs to the heparin-binding growth factors family. In terms of assembly, interacts with FGFBP1. Interacts with FGFR2. Affinity between fibroblast growth factors (FGFs) and their receptors is increased by heparan sulfate glycosaminoglycans that function as coreceptors.

The protein localises to the secreted. Its function is as follows. Plays an important role in the regulation of embryonic development, cell proliferation and cell differentiation. Required for normal branching morphogenesis. Growth factor active on keratinocytes. Possible major paracrine effector of normal epithelial cell proliferation. This Cervus elaphus (Red deer) protein is Fibroblast growth factor 7 (FGF7).